A 346-amino-acid chain; its full sequence is MKQIINPLKGNDNKIPIWFMRQAGRYLPEYKKVRETTKNFLDFCYDVNKATEVTLQPIKRYGFDAAIIFSDILVLPHAFGWEVDFKENIGPILKQFKSQEDFKYLQINPNDKLEKVYEIIKKVKKELPSPTSLIGFAGSPWTVMSYMLEGKGKQDFKTSKKFIYENKILAEELLNFITEKTADHLINQAKSGVDVLKLFDSWSGVLAEEEFTEFVIEPTKKIVLKVKEVFPKTPIIAFPKGAGLLYEKFIKEVPIDILAVDQMVPLEKMKEWSDKVIVQGNLDPVVLLTNKEIIKEKTYKILQAMKGKNFIFNLGHGILPETPTENVEFLTEYVRLYEEKNSNSTF.

Substrate contacts are provided by residues 21–25, aspartate 71, tyrosine 146, serine 201, and histidine 316; that span reads RQAGR.

It belongs to the uroporphyrinogen decarboxylase family. In terms of assembly, homodimer.

Its subcellular location is the cytoplasm. It carries out the reaction uroporphyrinogen III + 4 H(+) = coproporphyrinogen III + 4 CO2. Its pathway is porphyrin-containing compound metabolism; protoporphyrin-IX biosynthesis; coproporphyrinogen-III from 5-aminolevulinate: step 4/4. In terms of biological role, catalyzes the decarboxylation of four acetate groups of uroporphyrinogen-III to yield coproporphyrinogen-III. This Rickettsia massiliae (strain Mtu5) protein is Uroporphyrinogen decarboxylase.